Consider the following 150-residue polypeptide: Seminal ribonuclease (150 aa).

Residues Met1 to Gly26 form the signal peptide. Residues Lys33 and Arg36 each contribute to the substrate site. The active-site Proton acceptor is the His38. Disulfide bonds link Cys52/Cys110, Cys66/Cys121, Cys84/Cys136, and Cys91/Cys98. Substrate is bound by residues Lys67 to Thr71 and Lys92. Asn93 is subject to Deamidated asparagine; by deterioration. Arg111 lines the substrate pocket. His145 acts as the Proton donor in catalysis.

The protein belongs to the pancreatic ribonuclease family. As to quaternary structure, homodimer; disulfide-linked. As to expression, seminal plasma. Can reach 3% of the protein content of this fluid.

The protein resides in the secreted. The enzyme catalyses an [RNA] containing cytidine + H2O = an [RNA]-3'-cytidine-3'-phosphate + a 5'-hydroxy-ribonucleotide-3'-[RNA].. It carries out the reaction an [RNA] containing uridine + H2O = an [RNA]-3'-uridine-3'-phosphate + a 5'-hydroxy-ribonucleotide-3'-[RNA].. Allosteric regulation by both substrate and reaction products. This enzyme hydrolyzes both single- and double-stranded RNA. This chain is Seminal ribonuclease (SRN), found in Bos taurus (Bovine).